We begin with the raw amino-acid sequence, 402 residues long: D-mannonate dehydratase (402 aa).

Residues Asn-37 and His-122 each contribute to the substrate site. Tyr-159 acts as the Proton donor/acceptor in catalysis. Asp-210 is a Mg(2+) binding site. The active-site Proton donor/acceptor is His-212. The Mg(2+) site is built by Glu-236 and Glu-262. The substrate site is built by Glu-262, Arg-283, His-312, Asp-316, and Glu-339.

Belongs to the mandelate racemase/muconate lactonizing enzyme family. GalD subfamily. In terms of assembly, homotetramer. It depends on Mg(2+) as a cofactor.

It catalyses the reaction D-mannonate = 2-dehydro-3-deoxy-D-gluconate + H2O. Its pathway is carbohydrate metabolism; pentose and glucuronate interconversion. Catalyzes the dehydration of D-mannonate. Has no detectable activity with a panel of 70 other acid sugars (in vitro). The protein is D-mannonate dehydratase (manD) of Novosphingobium aromaticivorans (strain ATCC 700278 / DSM 12444 / CCUG 56034 / CIP 105152 / NBRC 16084 / F199).